Here is an 87-residue protein sequence, read N- to C-terminus: MANTKSAKKAIRVIAKKTAVNKDRRSRMRTFVRKVEEALASGDKTAAQEALRAAQPEIMRAAQKGVIHKNTASRKVSRFTQRVKALS.

It belongs to the bacterial ribosomal protein bS20 family.

Functionally, binds directly to 16S ribosomal RNA. This chain is Small ribosomal subunit protein bS20, found in Parvibaculum lavamentivorans (strain DS-1 / DSM 13023 / NCIMB 13966).